A 54-amino-acid chain; its full sequence is Small, acid-soluble spore protein gamma-type (54 aa).

The disordered stretch occupies residues 1 to 54 (MAKKNRNKQQQEMQQQQQQHQAEFANEFAEGSSAEQARQQQQKAAGKRQKKNQQ). 2 stretches are compositionally biased toward low complexity: residues 10–21 (QQEMQQQQQQHQ) and 29–44 (AEGSSAEQARQQQQKA). Positions 45-54 (AGKRQKKNQQ) are enriched in basic residues.

This sequence belongs to the gamma-type SASP family.

In terms of biological role, SASP are proteins degraded in the first minutes of spore germination and provide amino acids for both new protein synthesis and metabolism. These proteins may be involved in dormant spore's high resistance to UV light. This chain is Small, acid-soluble spore protein gamma-type (sspA), found in Alkalihalophilus pseudofirmus (strain ATCC BAA-2126 / JCM 17055 / OF4) (Bacillus pseudofirmus).